A 304-amino-acid chain; its full sequence is Porphobilinogen deaminase (304 aa).

S-(dipyrrolylmethanemethyl)cysteine is present on Cys240.

It belongs to the HMBS family. As to quaternary structure, monomer. Dipyrromethane serves as cofactor.

The catalysed reaction is 4 porphobilinogen + H2O = hydroxymethylbilane + 4 NH4(+). Its pathway is porphyrin-containing compound metabolism; protoporphyrin-IX biosynthesis; coproporphyrinogen-III from 5-aminolevulinate: step 2/4. Tetrapolymerization of the monopyrrole PBG into the hydroxymethylbilane pre-uroporphyrinogen in several discrete steps. This Xanthomonas euvesicatoria pv. vesicatoria (strain 85-10) (Xanthomonas campestris pv. vesicatoria) protein is Porphobilinogen deaminase.